Here is a 372-residue protein sequence, read N- to C-terminus: Putative aminopeptidase SgcX (372 aa).

Positions 67 and 180 each coordinate a divalent metal cation. Glu-212 acts as the Proton acceptor in catalysis. 3 residues coordinate a divalent metal cation: Glu-213, Asp-235, and His-329.

Belongs to the peptidase M42 family. The cofactor is a divalent metal cation.

The polypeptide is Putative aminopeptidase SgcX (sgcX) (Salmonella typhimurium (strain LT2 / SGSC1412 / ATCC 700720)).